The primary structure comprises 354 residues: Probable calcium-binding protein CML50 (354 aa).

2 stretches are compositionally biased toward low complexity: residues 1–10 (MSGYPPTSQG) and 28–71 (YSSG…SSYG). Positions 1 to 159 (MSGYPPTSQG…PASSGHGGGY (159 aa)) are disordered. Positions 72-81 (APPPSAPYAP) are enriched in pro residues. Low complexity predominate over residues 106 to 117 (GSSDYGSYGAGP). EF-hand domains follow at residues 183–218 (GTDPNIVACFQAADQDGSGFIDDKELQGALSSYQQR) and 249–284 (YSLQNWRSIFERSDKDRSGRIDVNELRDALLSLGFS). Residues D196, D198, S200, E207, D262, D264, S266, R268, and E273 each contribute to the Ca(2+) site.

Functionally, potential calcium sensor. This Arabidopsis thaliana (Mouse-ear cress) protein is Probable calcium-binding protein CML50 (CML50).